The following is a 537-amino-acid chain: 2-succinyl-5-enolpyruvyl-6-hydroxy-3-cyclohexene-1-carboxylate synthase (537 aa).

The protein belongs to the TPP enzyme family. MenD subfamily. Homodimer. Requires Mg(2+) as cofactor. Mn(2+) is required as a cofactor. The cofactor is thiamine diphosphate.

The catalysed reaction is isochorismate + 2-oxoglutarate + H(+) = 5-enolpyruvoyl-6-hydroxy-2-succinyl-cyclohex-3-ene-1-carboxylate + CO2. It participates in quinol/quinone metabolism; 1,4-dihydroxy-2-naphthoate biosynthesis; 1,4-dihydroxy-2-naphthoate from chorismate: step 2/7. It functions in the pathway quinol/quinone metabolism; menaquinone biosynthesis. Functionally, catalyzes the thiamine diphosphate-dependent decarboxylation of 2-oxoglutarate and the subsequent addition of the resulting succinic semialdehyde-thiamine pyrophosphate anion to isochorismate to yield 2-succinyl-5-enolpyruvyl-6-hydroxy-3-cyclohexene-1-carboxylate (SEPHCHC). This chain is 2-succinyl-5-enolpyruvyl-6-hydroxy-3-cyclohexene-1-carboxylate synthase, found in Rhodococcus erythropolis (strain PR4 / NBRC 100887).